A 203-amino-acid chain; its full sequence is Small ribosomal subunit protein uS4 (203 aa).

The region spanning Arg-93–Val-156 is the S4 RNA-binding domain.

The protein belongs to the universal ribosomal protein uS4 family. Part of the 30S ribosomal subunit. Contacts protein S5. The interaction surface between S4 and S5 is involved in control of translational fidelity.

In terms of biological role, one of the primary rRNA binding proteins, it binds directly to 16S rRNA where it nucleates assembly of the body of the 30S subunit. With S5 and S12 plays an important role in translational accuracy. This chain is Small ribosomal subunit protein uS4, found in Streptococcus sanguinis (strain SK36).